The primary structure comprises 281 residues: NADPH-dependent 7-cyano-7-deazaguanine reductase (281 aa).

Residue 86 to 88 participates in substrate binding; it reads IES. An NADPH-binding site is contributed by 88–89; it reads SK. Cys189 (thioimide intermediate) is an active-site residue. The active-site Proton donor is Asp196. 228-229 lines the substrate pocket; sequence HE. 257–258 serves as a coordination point for NADPH; it reads RG.

It belongs to the GTP cyclohydrolase I family. QueF type 2 subfamily. In terms of assembly, homodimer.

The protein resides in the cytoplasm. The catalysed reaction is 7-aminomethyl-7-carbaguanine + 2 NADP(+) = 7-cyano-7-deazaguanine + 2 NADPH + 3 H(+). The protein operates within tRNA modification; tRNA-queuosine biosynthesis. Its function is as follows. Catalyzes the NADPH-dependent reduction of 7-cyano-7-deazaguanine (preQ0) to 7-aminomethyl-7-deazaguanine (preQ1). In Mannheimia succiniciproducens (strain KCTC 0769BP / MBEL55E), this protein is NADPH-dependent 7-cyano-7-deazaguanine reductase.